The sequence spans 330 residues: L-tryptophan isonitrile synthase AmbI2 (330 aa).

It belongs to the isocyanide synthase family.

It carries out the reaction D-ribulose 5-phosphate + L-tryptophan = (2S)-3-(1H-indol-3-yl)-2-isocyanopropanoate + hydroxyacetone + formaldehyde + phosphate + H2O + H(+). Functionally, involved in the biosynthesis of ambiguines, a family of hapalindole-type alkaloids. Responsible for the synthesis of the isonitrile group on tryptophan using ribulose 5-phosphate as the source of the carbon atom. The polypeptide is L-tryptophan isonitrile synthase AmbI2 (Fischerella ambigua (strain UTEX 1903)).